A 161-amino-acid chain; its full sequence is Cytochrome c-type biogenesis protein CcmE (161 aa).

Over 1–8 (MNARRKKR) the chain is Cytoplasmic. A helical; Signal-anchor for type II membrane protein transmembrane segment spans residues 9–29 (LALATALIGGVAAIASLLLYA). At 30 to 161 (LNSNLNLFYT…EYDSTQKTGY (132 aa)) the chain is on the periplasmic side. The heme site is built by histidine 131 and tyrosine 135.

Belongs to the CcmE/CycJ family.

The protein resides in the cell inner membrane. In terms of biological role, heme chaperone required for the biogenesis of c-type cytochromes. Transiently binds heme delivered by CcmC and transfers the heme to apo-cytochromes in a process facilitated by CcmF and CcmH. This is Cytochrome c-type biogenesis protein CcmE from Shewanella loihica (strain ATCC BAA-1088 / PV-4).